The following is a 298-amino-acid chain: ADP/ATP translocase 3 (298 aa).

Methionine 1 is subject to N-acetylmethionine. Residues methionine 1 to serine 7 lie on the Mitochondrial intermembrane side of the membrane. At threonine 2 the chain carries N-acetylthreonine; in ADP/ATP translocase 3, N-terminally processed. A Solcar 1 repeat occupies isoleucine 6–isoleucine 98. The chain crosses the membrane as a helical span at residues phenylalanine 8–glutamine 37. The Mitochondrial matrix portion of the chain corresponds to valine 38–asparagine 74. The residue at position 52 (lysine 52) is an N6,N6,N6-trimethyllysine. Residues leucine 75–phenylalanine 99 form a helical membrane-spanning segment. Positions 80 and 92 each coordinate ADP. Residues leucine 100–phenylalanine 109 are Mitochondrial intermembrane-facing. Residue lysine 105 is modified to N6-acetyllysine. A helical membrane pass occupies residues tryptophan 110–phenylalanine 130. 2 Solcar repeats span residues arginine 111 to methionine 201 and valine 212 to valine 297. Topologically, residues valine 131–asparagine 178 are mitochondrial matrix. Residues valine 179–lysine 199 traverse the membrane as a helical segment. At glycine 200–isoleucine 210 the chain is on the mitochondrial intermembrane side. A helical transmembrane segment spans residues valine 211–phenylalanine 231. Residues aspartate 232 to glycine 273 lie on the Mitochondrial matrix side of the membrane. Arginine 235 is a binding site for ADP. The interval arginine 235–methionine 240 is important for transport activity. The Nucleotide carrier signature motif signature appears at arginine 235 to methionine 240. Lysine 268 carries the post-translational modification N6-acetyllysine. The chain crosses the membrane as a helical span at residues alanine 274–tyrosine 291. The Mitochondrial intermembrane segment spans residues aspartate 292–isoleucine 298.

Belongs to the mitochondrial carrier (TC 2.A.29) family. Monomer. Found in a complex with ARL2, ARL2BP and SLC25A6/ANT3. In terms of processing, trimethylated by ANTKMT at Lys-52.

The protein resides in the mitochondrion inner membrane. Its subcellular location is the membrane. It catalyses the reaction ADP(in) + ATP(out) = ADP(out) + ATP(in). The catalysed reaction is H(+)(in) = H(+)(out). Its activity is regulated as follows. The matrix-open state (m-state) is inhibited by the membrane-permeable bongkrekic acid (BKA). The cytoplasmic-open state (c-state) is inhibited by the membrane-impermeable toxic inhibitor carboxyatractyloside (CATR). Proton transporter activity is inhibited by ADP:ATP antiporter activity. ADP:ATP antiporter that mediates import of ADP into the mitochondrial matrix for ATP synthesis, and export of ATP out to fuel the cell. Cycles between the cytoplasmic-open state (c-state) and the matrix-open state (m-state): operates by the alternating access mechanism with a single substrate-binding site intermittently exposed to either the cytosolic (c-state) or matrix (m-state) side of the inner mitochondrial membrane. In addition to its ADP:ATP antiporter activity, also involved in mitochondrial uncoupling and mitochondrial permeability transition pore (mPTP) activity. Plays a role in mitochondrial uncoupling by acting as a proton transporter: proton transport uncouples the proton flows via the electron transport chain and ATP synthase to reduce the efficiency of ATP production and cause mitochondrial thermogenesis. Proton transporter activity is inhibited by ADP:ATP antiporter activity, suggesting that SLC25A6/ANT3 acts as a master regulator of mitochondrial energy output by maintaining a delicate balance between ATP production (ADP:ATP antiporter activity) and thermogenesis (proton transporter activity). Proton transporter activity requires free fatty acids as cofactor, but does not transport it. Also plays a key role in mPTP opening, a non-specific pore that enables free passage of the mitochondrial membranes to solutes of up to 1.5 kDa, and which contributes to cell death. It is however unclear if SLC25A6/ANT3 constitutes a pore-forming component of mPTP or regulates it. In Sus scrofa (Pig), this protein is ADP/ATP translocase 3.